The sequence spans 173 residues: SKP1-like protein 1 (173 aa).

The interval 115–173 is interaction with the F-box domain of F-box proteins; the sequence is ILAANYLNIKGLLDLTCQTVADMIKGKTPEEIRKTFNIKNDFTPEEEEEIRRENQWAFE.

This sequence belongs to the SKP1 family. As to quaternary structure, part of a SCF (SKP1-CUL1-F-box protein) E3 ubiquitin-protein ligase complex. Interacts directly with MOF (via F-box domain). Interacts with rice black streaked dwarf virus RBSDV protein P7-2. Is able to form the SCF complex together with CUL1 and the viral P7-2 protein. Interacts with D3.

The protein localises to the nucleus. Its pathway is protein modification; protein ubiquitination. Functionally, involved in ubiquitination and subsequent proteasomal degradation of target proteins. Together with CUL1, a RING-box and a F-box protein, it forms a SCF E3 ubiquitin ligase complex. The functional specificity of this complex depends on the type of F-box protein. In the SCF complex, it serves as an adapter that links the F-box protein to CUL1. The protein is SKP1-like protein 1 of Oryza sativa subsp. japonica (Rice).